A 215-amino-acid chain; its full sequence is N-(5'-phosphoribosyl)anthranilate isomerase (215 aa).

The protein belongs to the TrpF family.

The enzyme catalyses N-(5-phospho-beta-D-ribosyl)anthranilate = 1-(2-carboxyphenylamino)-1-deoxy-D-ribulose 5-phosphate. The protein operates within amino-acid biosynthesis; L-tryptophan biosynthesis; L-tryptophan from chorismate: step 3/5. In Pelodictyon phaeoclathratiforme (strain DSM 5477 / BU-1), this protein is N-(5'-phosphoribosyl)anthranilate isomerase.